Consider the following 124-residue polypeptide: Astakine (124 aa).

A signal peptide spans 1 to 21 (MAVSSAVRMLSVACLVVSAAG). Intrachain disulfides connect cysteine 28–cysteine 40, cysteine 34–cysteine 52, cysteine 39–cysteine 91, cysteine 62–cysteine 99, and cysteine 93–cysteine 106.

This sequence belongs to the AVIT (prokineticin) family.

The protein localises to the secreted. Functionally, cytokine directly involved in hematopoiesis. The sequence is that of Astakine from Penaeus monodon (Giant tiger prawn).